The following is a 715-amino-acid chain: Fatty acid oxidation complex subunit alpha (715 aa).

Positions 1 to 190 (MIYEGKAITV…KVGAVDAVVA (190 aa)) are enoyl-CoA hydratase/isomerase. D297 provides a ligand contact to substrate. The segment at 312-715 (KDVKQAAVLG…MAKNGQSFFG (404 aa)) is 3-hydroxyacyl-CoA dehydrogenase. NAD(+) is bound by residues M325, D344, 401 to 403 (VVE), K408, and S430. Catalysis depends on H451, which acts as the For 3-hydroxyacyl-CoA dehydrogenase activity. N454 contacts NAD(+). The substrate site is built by N501 and Y660.

It in the N-terminal section; belongs to the enoyl-CoA hydratase/isomerase family. In the C-terminal section; belongs to the 3-hydroxyacyl-CoA dehydrogenase family. In terms of assembly, heterotetramer of two alpha chains (FadB) and two beta chains (FadA).

It catalyses the reaction a (3S)-3-hydroxyacyl-CoA + NAD(+) = a 3-oxoacyl-CoA + NADH + H(+). The catalysed reaction is a (3S)-3-hydroxyacyl-CoA = a (2E)-enoyl-CoA + H2O. The enzyme catalyses a 4-saturated-(3S)-3-hydroxyacyl-CoA = a (3E)-enoyl-CoA + H2O. It carries out the reaction (3S)-3-hydroxybutanoyl-CoA = (3R)-3-hydroxybutanoyl-CoA. It catalyses the reaction a (3Z)-enoyl-CoA = a 4-saturated (2E)-enoyl-CoA. The catalysed reaction is a (3E)-enoyl-CoA = a 4-saturated (2E)-enoyl-CoA. It participates in lipid metabolism; fatty acid beta-oxidation. Functionally, involved in the aerobic and anaerobic degradation of long-chain fatty acids via beta-oxidation cycle. Catalyzes the formation of 3-oxoacyl-CoA from enoyl-CoA via L-3-hydroxyacyl-CoA. It can also use D-3-hydroxyacyl-CoA and cis-3-enoyl-CoA as substrate. In Pseudomonas fluorescens (strain ATCC BAA-477 / NRRL B-23932 / Pf-5), this protein is Fatty acid oxidation complex subunit alpha.